A 142-amino-acid chain; its full sequence is Protein Turandot X (142 aa).

The first 22 residues, 1-22, serve as a signal peptide directing secretion; the sequence is MGLSIGSLLICVFLGIVPFATA.

This sequence belongs to the Turandot family.

Its subcellular location is the secreted. Its function is as follows. A humoral factor that may play a role in stress tolerance. The polypeptide is Protein Turandot X (Drosophila melanogaster (Fruit fly)).